The chain runs to 279 residues: Oxygen-dependent coproporphyrinogen-III oxidase (279 aa).

Ser-102 contacts substrate. A divalent metal cation contacts are provided by His-106 and His-116. The active-site Proton donor is the His-116. 118–120 (NTR) is a substrate binding site. A divalent metal cation contacts are provided by His-149 and His-179. The interval 244-279 (YVEFNLLYDRGTKFGLMTDGNVEAILMSLPPEVKFN) is important for dimerization.

The protein belongs to the aerobic coproporphyrinogen-III oxidase family. In terms of assembly, homodimer. A divalent metal cation is required as a cofactor.

Its subcellular location is the cytoplasm. The catalysed reaction is coproporphyrinogen III + O2 + 2 H(+) = protoporphyrinogen IX + 2 CO2 + 2 H2O. It functions in the pathway porphyrin-containing compound metabolism; protoporphyrin-IX biosynthesis; protoporphyrinogen-IX from coproporphyrinogen-III (O2 route): step 1/1. In terms of biological role, involved in the heme biosynthesis. Catalyzes the aerobic oxidative decarboxylation of propionate groups of rings A and B of coproporphyrinogen-III to yield the vinyl groups in protoporphyrinogen-IX. This Rickettsia conorii (strain ATCC VR-613 / Malish 7) protein is Oxygen-dependent coproporphyrinogen-III oxidase.